A 115-amino-acid polypeptide reads, in one-letter code: Non-specific lipid-transfer protein (115 aa).

An N-terminal signal peptide occupies residues 1-24; sequence MASSAVTKLALVVALCMAVSVAHA. Disulfide bonds link C27-C74, C37-C51, C52-C97, and C72-C111.

It belongs to the plant LTP family.

Plant non-specific lipid-transfer proteins transfer phospholipids as well as galactolipids across membranes. May play a role in wax or cutin deposition in the cell walls of expanding epidermal cells and certain secretory tissues. This is Non-specific lipid-transfer protein (MALD3) from Malus domestica (Apple).